We begin with the raw amino-acid sequence, 621 residues long: Cryptochrome-1 (621 aa).

The Photolyase/cryptochrome alpha/beta domain occupies 3–132; that stretch reads VNAVHWFRKG…EVIVRISHTL (130 aa). 3 short sequence motifs (LIR) span residues 50–54, 82–87, and 151–156; these read NRWRF, DVFPRL, and KRFQTL. Residue serine 252 participates in FAD binding. Short sequence motifs (LIR) lie at residues 255 to 260, 271 to 276, 285 to 290, and 335 to 339; these read LRFGCL, DLYKKV, SLYGQL, and TGFPW. An FAD-binding site is contributed by glutamine 289. An FAD-binding site is contributed by histidine 355. Positions 379–384 match the LIR 8 motif; that stretch reads KVFEEL. 387-389 contacts FAD; the sequence is DAD. 5 short sequence motifs (LIR) span residues 395 to 400, 411 to 416, 430 to 435, 486 to 491, and 492 to 497; these read GSWMWL, HCYCPV, RRYLPV, QIYQQL, and SRYRGL. The interval 581-621 is disordered; sequence QSHLMQPGRASLGTGISAGKRPNPEEETQSVGPKVQRQSTN.

It belongs to the DNA photolyase class-1 family. Component of the circadian core oscillator, which includes the CRY proteins, CLOCK or NPAS2, BMAL1 or BMAL2, CSNK1E, and the PER proteins. It depends on FAD as a cofactor. The cofactor is (6R)-5,10-methylene-5,6,7,8-tetrahydrofolate. Expressed in the pineal gland.

Its subcellular location is the cytoplasm. It localises to the nucleus. Functionally, transcriptional repressor which forms a core component of the circadian clock. The circadian clock, an internal time-keeping system, regulates various physiological processes through the generation of approximately 24 hour circadian rhythms in gene expression, which are translated into rhythms in metabolism and behavior. It is derived from the Latin roots 'circa' (about) and 'diem' (day) and acts as an important regulator of a wide array of physiological functions including metabolism, sleep, body temperature, blood pressure, endocrine, immune, cardiovascular, and renal function. Consists of two major components: the central clock, residing in the suprachiasmatic nucleus (SCN) of the brain, and the peripheral clocks that are present in nearly every tissue and organ system. Both the central and peripheral clocks can be reset by environmental cues, also known as Zeitgebers (German for 'timegivers'). The predominant Zeitgeber for the central clock is light, which is sensed by retina and signals directly to the SCN. The central clock entrains the peripheral clocks through neuronal and hormonal signals, body temperature and feeding-related cues, aligning all clocks with the external light/dark cycle. Circadian rhythms allow an organism to achieve temporal homeostasis with its environment at the molecular level by regulating gene expression to create a peak of protein expression once every 24 hours to control when a particular physiological process is most active with respect to the solar day. Transcription and translation of core clock components (CLOCK, NPAS2, BMAL1, BMAL2, PER1, PER2, PER3, CRY1 and CRY2) plays a critical role in rhythm generation, whereas delays imposed by post-translational modifications (PTMs) are important for determining the period (tau) of the rhythms (tau refers to the period of a rhythm and is the length, in time, of one complete cycle). A diurnal rhythm is synchronized with the day/night cycle, while the ultradian and infradian rhythms have a period shorter and longer than 24 hours, respectively. Disruptions in the circadian rhythms contribute to the pathology of cardiovascular diseases, cancer, metabolic syndromes and aging. A transcription/translation feedback loop (TTFL) forms the core of the molecular circadian clock mechanism. Transcription factors, CLOCK or NPAS2 and BMAL1 or BMAL2, form the positive limb of the feedback loop, act in the form of a heterodimer and activate the transcription of core clock genes and clock-controlled genes (involved in key metabolic processes), harboring E-box elements (5'-CACGTG-3') within their promoters. The core clock genes: PER1/2/3 and CRY1/2 which are transcriptional repressors form the negative limb of the feedback loop and interact with the CLOCK|NPAS2-BMAL1|BMAL2 heterodimer inhibiting its activity and thereby negatively regulating their own expression. This heterodimer also activates nuclear receptors NR1D1/2 and RORA/B/G, which form a second feedback loop and which activate and repress BMAL1 transcription, respectively. CRY1 and CRY2 have redundant functions but also differential and selective contributions at least in defining the pace of the SCN circadian clock and its circadian transcriptional outputs. More potent transcriptional repressor in cerebellum and liver than CRY2, though more effective in lengthening the period of the SCN oscillator. On its side, CRY2 seems to play a critical role in tuning SCN circadian period by opposing the action of CRY1. With CRY2, is dispensable for circadian rhythm generation but necessary for the development of intercellular networks for rhythm synchrony. Capable of translocating circadian clock core proteins such as PER proteins to the nucleus. Interacts with CLOCK-BMAL1 independently of PER proteins and is found at CLOCK-BMAL1-bound sites, suggesting that CRY may act as a molecular gatekeeper to maintain CLOCK-BMAL1 in a poised and repressed state until the proper time for transcriptional activation. Represses CLOCK-BMAL1-mediated transcriptional activation. This is Cryptochrome-1 (CRY1) from Gallus gallus (Chicken).